We begin with the raw amino-acid sequence, 327 residues long: Gamma-resorcylate decarboxylase (327 aa).

Positions 8 and 10 each coordinate Zn(2+). Positions 23, 164, and 287 each coordinate 2,6-dihydroxybenzoate. Zn(2+)-binding residues include His164 and Asp287. Asp287 is a catalytic residue.

Belongs to the metallo-dependent hydrolases superfamily. ACMSD family. Homotetramer. Dimer of dimers. It depends on Zn(2+) as a cofactor.

The enzyme catalyses 2,6-dihydroxybenzoate + H(+) = resorcinol + CO2. The catalysed reaction is 2,3-dihydroxybenzoate + H(+) = catechol + CO2. It functions in the pathway aromatic compound metabolism. Its activity is regulated as follows. Inhibited by CuCl(2), monoiodoacetate and diethylpyrocarbonate. Inhibited by 2,3-dihydroxybenzaldehyde, which is an analog of the substrate 2,3-dihydroxybenzoate. Its function is as follows. Involved in the gamma-resorcylate (2,6-dihydroxybenzoate) catabolism. Catalyzes the reversible decarboxylation of gamma-resorcylate to resorcinol. The reaction is reversible, but equilibrium greatly favors the decarboxylation reaction. Also catalyzes the decarboxylation of 2,3-dihydroxybenzoate to catechol, but does not act on 2,4-dihydroxybenzoate, 2,5-dihydroxybenzoate, 3,4-dihydroxybenzoate, 3,5-dihydroxybenzoate, 2-hydroxybenzoate, or 3-hydroxybenzoate. Only resorcinol is carboxylated by the reverse reaction. The polypeptide is Gamma-resorcylate decarboxylase (Rhizobium sp. (strain MTP-10005)).